A 537-amino-acid chain; its full sequence is Cytochrome P450 86A8 (537 aa).

A helical membrane pass occupies residues 3 to 23; that stretch reads ISTALMILSAITAYFLWLTFI. Residue cysteine 458 participates in heme binding.

The protein belongs to the cytochrome P450 family. Requires heme as cofactor. Expressed in leaves, stems, flowers and siliques. Expressed at low levels in roots.

Its subcellular location is the membrane. The catalysed reaction is an organic molecule + reduced [NADPH--hemoprotein reductase] + O2 = an alcohol + oxidized [NADPH--hemoprotein reductase] + H2O + H(+). In terms of biological role, catalyzes the omega-hydroxylation of various fatty acids (FA). Acts on saturated and unsaturated fatty acids with chain lengths from C12 to C18. May be involved in the biosynthesis of cutin in the epidermis which prevents post-genital organ fusions. Hydroxylated FAs may be important for trichome differentiation, establishment of apical dominance and senescence. The protein is Cytochrome P450 86A8 (CYP86A8) of Arabidopsis thaliana (Mouse-ear cress).